A 451-amino-acid polypeptide reads, in one-letter code: Uronate isomerase (451 aa).

This sequence belongs to the metallo-dependent hydrolases superfamily. Uronate isomerase family.

It catalyses the reaction D-glucuronate = D-fructuronate. The enzyme catalyses aldehydo-D-galacturonate = keto-D-tagaturonate. The protein operates within carbohydrate metabolism; pentose and glucuronate interconversion. This chain is Uronate isomerase, found in Thermotoga sp. (strain RQ2).